The chain runs to 226 residues: UPF0758 protein SUB0843 (226 aa).

Positions 103 to 225 (QILSSYQVAK…YYSFREKSDI (123 aa)) constitute an MPN domain. Zn(2+)-binding residues include His174, His176, and Asp187. Residues 174–187 (HNHPSGLTNPSEND) carry the JAMM motif motif.

The protein belongs to the UPF0758 family.

The polypeptide is UPF0758 protein SUB0843 (Streptococcus uberis (strain ATCC BAA-854 / 0140J)).